We begin with the raw amino-acid sequence, 297 residues long: Homoserine kinase (297 aa).

Residue 82–92 participates in ATP binding; the sequence is PVSRGLGSSAA.

It belongs to the GHMP kinase family. Homoserine kinase subfamily.

The protein localises to the cytoplasm. It carries out the reaction L-homoserine + ATP = O-phospho-L-homoserine + ADP + H(+). It functions in the pathway amino-acid biosynthesis; L-threonine biosynthesis; L-threonine from L-aspartate: step 4/5. In terms of biological role, catalyzes the ATP-dependent phosphorylation of L-homoserine to L-homoserine phosphate. The protein is Homoserine kinase of Clostridium botulinum (strain Kyoto / Type A2).